A 533-amino-acid polypeptide reads, in one-letter code: Bifunctional aspartate aminotransferase and L-aspartate beta-decarboxylase (533 aa).

Positions 115 and 256 each coordinate L-aspartate. Residue lysine 315 is modified to N6-(pyridoxal phosphate)lysine. Arginine 497 serves as a coordination point for L-aspartate.

Belongs to the class-I pyridoxal-phosphate-dependent aminotransferase family. As to quaternary structure, homododecamer. Pyridoxal 5'-phosphate serves as cofactor.

It carries out the reaction L-aspartate + H(+) = L-alanine + CO2. The catalysed reaction is L-aspartate + 2-oxoglutarate = oxaloacetate + L-glutamate. Bifunctional enzyme that has both L-aspartate decarboxylase and transaminase activity. This chain is Bifunctional aspartate aminotransferase and L-aspartate beta-decarboxylase, found in Comamonas testosteroni (Pseudomonas testosteroni).